The sequence spans 203 residues: Guanylate kinase (203 aa).

Residues 3–181 enclose the Guanylate kinase-like domain; the sequence is GTLYIVAAPS…AVSEMCAIFT (179 aa). 10–17 is an ATP binding site; it reads APSGAGKS.

It belongs to the guanylate kinase family.

Its subcellular location is the cytoplasm. The catalysed reaction is GMP + ATP = GDP + ADP. Its function is as follows. Essential for recycling GMP and indirectly, cGMP. The chain is Guanylate kinase from Xanthomonas oryzae pv. oryzae (strain MAFF 311018).